A 171-amino-acid chain; its full sequence is MFDGIGFMELLLIGVLGLVVLGPERLPVAVRSITSWIRAMKRMANSVKEELEQELKIEQLHADLKKAESKGLSNLSPELKESIEQLKQAAQSVNRPYQVQDPVKDTPAPENQIHSPVSSTVQTSQVHTSPAQASQANPTATVEASPTSASPATPSEPSQGADTRSNPKANG.

Residues 2–22 (FDGIGFMELLLIGVLGLVVLG) form a helical membrane-spanning segment. Residues 69 to 171 (SKGLSNLSPE…DTRSNPKANG (103 aa)) form a disordered region. Residues 88-97 (QAAQSVNRPY) show a composition bias toward polar residues. Composition is skewed to low complexity over residues 114 to 130 (HSPV…HTSP) and 138 to 158 (PTAT…SEPS). The span at 160-171 (GADTRSNPKANG) shows a compositional bias: polar residues.

This sequence belongs to the TatB family. In terms of assembly, the Tat system comprises two distinct complexes: a TatABC complex, containing multiple copies of TatA, TatB and TatC subunits, and a separate TatA complex, containing only TatA subunits. Substrates initially bind to the TatABC complex, which probably triggers association of the separate TatA complex to form the active translocon.

Its subcellular location is the cell inner membrane. In terms of biological role, part of the twin-arginine translocation (Tat) system that transports large folded proteins containing a characteristic twin-arginine motif in their signal peptide across membranes. Together with TatC, TatB is part of a receptor directly interacting with Tat signal peptides. TatB may form an oligomeric binding site that transiently accommodates folded Tat precursor proteins before their translocation. The polypeptide is Sec-independent protein translocase protein TatB (Shewanella baltica (strain OS185)).